The primary structure comprises 341 residues: Heme A synthase (341 aa).

5 consecutive transmembrane segments (helical) span residues 11-31 (AVST…IIGG), 101-121 (LIGL…HLSA), 127-147 (LFGL…MVAS), 160-180 (LATH…FSLE), and 194-214 (AGVT…GAFV). His259 contributes to the heme binding site. Transmembrane regions (helical) follow at residues 261-278 (WTGY…WQVW), 288-308 (FMVI…AALL), and 315-335 (LSLA…AAAW). His319 contributes to the heme binding site.

The protein belongs to the COX15/CtaA family. Type 2 subfamily. In terms of assembly, interacts with CtaB. Heme b is required as a cofactor.

It is found in the cell membrane. The enzyme catalyses Fe(II)-heme o + 2 A + H2O = Fe(II)-heme a + 2 AH2. It functions in the pathway porphyrin-containing compound metabolism; heme A biosynthesis; heme A from heme O: step 1/1. Its function is as follows. Catalyzes the conversion of heme O to heme A by two successive hydroxylations of the methyl group at C8. The first hydroxylation forms heme I, the second hydroxylation results in an unstable dihydroxymethyl group, which spontaneously dehydrates, resulting in the formyl group of heme A. The chain is Heme A synthase from Maricaulis maris (strain MCS10) (Caulobacter maris).